The following is a 220-amino-acid chain: Large ribosomal subunit protein uL3 (220 aa).

The tract at residues 145–169 (GPASHGSKFHRRPGSSGNRTWPGRV) is disordered.

Belongs to the universal ribosomal protein uL3 family. Part of the 50S ribosomal subunit. Forms a cluster with proteins L14 and L19.

One of the primary rRNA binding proteins, it binds directly near the 3'-end of the 23S rRNA, where it nucleates assembly of the 50S subunit. In Bdellovibrio bacteriovorus (strain ATCC 15356 / DSM 50701 / NCIMB 9529 / HD100), this protein is Large ribosomal subunit protein uL3.